We begin with the raw amino-acid sequence, 1150 residues long: GPI inositol-deacylase (1150 aa).

The interval 1–43 (MQGRPNGASGDPNPRNDTSVTIDSDSDNGSRHRIAEVRGSSPS) is disordered. Asn-16 and Asn-28 each carry an N-linked (GlcNAc...) asparagine glycan. The helical transmembrane segment at 122–142 (ICSGLVLFVTVSALLILSIIV) threads the bilayer. The active site involves Ser-309. The chain crosses the membrane as a helical span at residues 790-810 (LAMRYRTVFAAFPLLVVSLVL). The N-linked (GlcNAc...) asparagine glycan is linked to Asn-818. The helical transmembrane segment at 829–849 (ALDLCIRSSIPLLFLGLTFLA) threads the bilayer. Asn-870 carries an N-linked (GlcNAc...) asparagine glycan. A helical membrane pass occupies residues 890–910 (AFFWFLVPLFGIISIGTCVIV). Asn-942 is a glycosylation site (N-linked (GlcNAc...) asparagine). 5 helical membrane passes run 960-980 (VLLL…VACV), 1010-1030 (SIFI…IVWI), 1047-1067 (VFSI…TMIP), 1079-1099 (VLFF…AYLL), and 1102-1122 (ITNL…GFSL). N-linked (GlcNAc...) asparagine glycosylation is found at Asn-1124 and Asn-1130.

The protein belongs to the GPI inositol-deacylase family.

It is found in the endoplasmic reticulum membrane. In terms of biological role, involved in inositol deacylation of GPI-anchored proteins which plays important roles in the quality control and ER-associated degradation of GPI-anchored proteins. This is GPI inositol-deacylase (BST1) from Coccidioides immitis (strain RS) (Valley fever fungus).